The chain runs to 365 residues: Phosphopantothenate--cysteine ligase CAB2 (365 aa).

The tract at residues Gln-228 to Asp-250 is disordered. Positions Asn-238 to Thr-248 are enriched in polar residues.

It belongs to the PPC synthetase family. Homodimer.

The protein resides in the cytoplasm. Its subcellular location is the nucleus. The enzyme catalyses (R)-4'-phosphopantothenate + L-cysteine + CTP = N-[(R)-4-phosphopantothenoyl]-L-cysteine + CMP + diphosphate + H(+). It participates in cofactor biosynthesis; coenzyme A biosynthesis; CoA from (R)-pantothenate: step 2/5. Functionally, catalyzes the first step in the biosynthesis of coenzyme A from vitamin B5, where cysteine is conjugated to 4'-phosphopantothenate to form 4-phosphopantothenoylcysteine. The protein is Phosphopantothenate--cysteine ligase CAB2 (CAB2) of Saccharomyces cerevisiae (strain ATCC 204508 / S288c) (Baker's yeast).